The chain runs to 212 residues: Imidazole glycerol phosphate synthase subunit HisH (212 aa).

Residues 3-212 (DVAIIDYGMG…MLANFISWAP (210 aa)) form the Glutamine amidotransferase type-1 domain. C82 serves as the catalytic Nucleophile. Residues H192 and E194 contribute to the active site.

Heterodimer of HisH and HisF.

The protein localises to the cytoplasm. It carries out the reaction 5-[(5-phospho-1-deoxy-D-ribulos-1-ylimino)methylamino]-1-(5-phospho-beta-D-ribosyl)imidazole-4-carboxamide + L-glutamine = D-erythro-1-(imidazol-4-yl)glycerol 3-phosphate + 5-amino-1-(5-phospho-beta-D-ribosyl)imidazole-4-carboxamide + L-glutamate + H(+). The catalysed reaction is L-glutamine + H2O = L-glutamate + NH4(+). It functions in the pathway amino-acid biosynthesis; L-histidine biosynthesis; L-histidine from 5-phospho-alpha-D-ribose 1-diphosphate: step 5/9. Functionally, IGPS catalyzes the conversion of PRFAR and glutamine to IGP, AICAR and glutamate. The HisH subunit catalyzes the hydrolysis of glutamine to glutamate and ammonia as part of the synthesis of IGP and AICAR. The resulting ammonia molecule is channeled to the active site of HisF. This is Imidazole glycerol phosphate synthase subunit HisH from Aromatoleum aromaticum (strain DSM 19018 / LMG 30748 / EbN1) (Azoarcus sp. (strain EbN1)).